The chain runs to 612 residues: Dihydroxy-acid dehydratase (612 aa).

Asp-81 lines the Mg(2+) pocket. [2Fe-2S] cluster is bound at residue Cys-122. Residues Asp-123 and Lys-124 each coordinate Mg(2+). Position 124 is an N6-carboxylysine (Lys-124). Cys-195 lines the [2Fe-2S] cluster pocket. Mg(2+) is bound at residue Glu-491. Ser-517 (proton acceptor) is an active-site residue.

Belongs to the IlvD/Edd family. As to quaternary structure, homodimer. It depends on [2Fe-2S] cluster as a cofactor. The cofactor is Mg(2+).

It carries out the reaction (2R)-2,3-dihydroxy-3-methylbutanoate = 3-methyl-2-oxobutanoate + H2O. The catalysed reaction is (2R,3R)-2,3-dihydroxy-3-methylpentanoate = (S)-3-methyl-2-oxopentanoate + H2O. It participates in amino-acid biosynthesis; L-isoleucine biosynthesis; L-isoleucine from 2-oxobutanoate: step 3/4. Its pathway is amino-acid biosynthesis; L-valine biosynthesis; L-valine from pyruvate: step 3/4. In terms of biological role, functions in the biosynthesis of branched-chain amino acids. Catalyzes the dehydration of (2R,3R)-2,3-dihydroxy-3-methylpentanoate (2,3-dihydroxy-3-methylvalerate) into 2-oxo-3-methylpentanoate (2-oxo-3-methylvalerate) and of (2R)-2,3-dihydroxy-3-methylbutanoate (2,3-dihydroxyisovalerate) into 2-oxo-3-methylbutanoate (2-oxoisovalerate), the penultimate precursor to L-isoleucine and L-valine, respectively. This chain is Dihydroxy-acid dehydratase, found in Rhizobium etli (strain CIAT 652).